The sequence spans 467 residues: Ran-binding protein M homolog (467 aa).

Residues 1 to 25 (MNSSPPPANSANGDTTNNGENGQDL) are disordered. The span at 9–25 (NSANGDTTNNGENGQDL) shows a compositional bias: polar residues. In terms of domain architecture, B30.2/SPRY spans 31 to 219 (DKIRLSAKRD…VLVNFGKKKF (189 aa)). Positions 244 to 276 (PPNIGYGLVKTYLLHYGYEETLDAFNLATKNTV) constitute a LisH domain. Residues 295–353 (ALKQRKNLRQLVRNGEIDTALAELQKLYPQIVQDDKSVVCFLLHCQKFIELVRVGKLEE) form the CTLH domain.

Belongs to the RANBP9/10 family. Interacts with WDR36, WDS, GID8, MAEA and RMD5.

It localises to the cytoplasm. The protein localises to the nucleus. Its subcellular location is the perinuclear region. This is Ran-binding protein M homolog from Arabidopsis thaliana (Mouse-ear cress).